The primary structure comprises 235 residues: Fibrillarin-like rRNA/tRNA 2'-O-methyltransferase (235 aa).

S-adenosyl-L-methionine contacts are provided by residues 91–92 (TT), 110–111 (EF), 137–138 (DA), and 157–160 (DVAQ).

It belongs to the methyltransferase superfamily. Fibrillarin family. In terms of assembly, interacts with nop5. Component of box C/D small ribonucleoprotein (sRNP) particles that contain rpl7ae, FlpA and nop5, plus a guide RNA.

Its function is as follows. Involved in pre-rRNA and tRNA processing. Utilizes the methyl donor S-adenosyl-L-methionine to catalyze the site-specific 2'-hydroxyl methylation of ribose moieties in rRNA and tRNA. Site specificity is provided by a guide RNA that base pairs with the substrate. Methylation occurs at a characteristic distance from the sequence involved in base pairing with the guide RNA. This chain is Fibrillarin-like rRNA/tRNA 2'-O-methyltransferase, found in Pyrobaculum islandicum (strain DSM 4184 / JCM 9189 / GEO3).